A 382-amino-acid chain; its full sequence is tRNA-specific 2-thiouridylase MnmA (382 aa).

ATP-binding positions include 18–25 (AMSGGVDS) and leucine 44. Cysteine 112 functions as the Nucleophile in the catalytic mechanism. A disulfide bridge links cysteine 112 with cysteine 209. Residue glycine 136 participates in ATP binding. Positions 159 to 161 (RDQ) are interaction with tRNA. Catalysis depends on cysteine 209, which acts as the Cysteine persulfide intermediate.

The protein belongs to the MnmA/TRMU family.

It is found in the cytoplasm. The catalysed reaction is S-sulfanyl-L-cysteinyl-[protein] + uridine(34) in tRNA + AH2 + ATP = 2-thiouridine(34) in tRNA + L-cysteinyl-[protein] + A + AMP + diphosphate + H(+). Functionally, catalyzes the 2-thiolation of uridine at the wobble position (U34) of tRNA, leading to the formation of s(2)U34. This Methylobacterium sp. (strain 4-46) protein is tRNA-specific 2-thiouridylase MnmA.